Reading from the N-terminus, the 123-residue chain is Omega-oxotoxin-Ot1a (123 aa).

Residues Met1–Ala16 form the signal peptide. A propeptide spanning residues Thr17 to Arg54 is cleaved from the precursor. Residues Asp55 to Lys122 form the Oxytoxin-type inhibitor cystine knot (ICK) domain. 5 disulfide bridges follow: Cys58–Cys72, Cys65–Cys77, Cys69–Cys118, Cys71–Cys106, and Cys79–Cys104.

The protein belongs to the spiderine family. Spiderine subfamily. Post-translationally, mass spectrometry data suggest a carboxylated free C-terminal residue. In terms of tissue distribution, expressed by the venom gland.

It localises to the secreted. In terms of biological role, weak blocker of vertebrate P/Q-, N- and L-type voltage-gated calcium channels (Cav1 and Cav2). Is both paralytic and lethal when injected into lepidopteran larvae. Is not toxic to mice. This chain is Omega-oxotoxin-Ot1a, found in Oxyopes takobius (Lynx spider).